We begin with the raw amino-acid sequence, 1529 residues long: ABC multidrug transporter AFR2 (1529 aa).

The region spanning 144–394 (GSLRDLIGNR…FVDMGFHCPS (251 aa)) is the ABC transporter 1 domain. Residues Asn235 and Asn318 are each glycosylated (N-linked (GlcNAc...) asparagine). Helical transmembrane passes span 510-530 (LFGNFIMALIIGSVFYNLPVT), 539-559 (ALLFFAILMSAFGSALEILIL), 589-609 (IPYKVMNCIIFNLTLYFMTNL), 614-634 (GAYFFFMLISFTLTMVMSMLF), and 648-668 (LAPAALLILGLVMYTGFAVNV). A glycan (N-linked (GlcNAc...) asparagine) is linked at Asn742. A helical membrane pass occupies residues 757–777 (GILIGFFLFFTAIYLTATEFI). The region spanning 845–1087 (FSWKDVVYDI…ILIDYFEKNG (243 aa)) is the ABC transporter 2 domain. ATP is bound at residue 881-888 (GVSGAGKT). Helical transmembrane passes span 1193–1213 (YIWAKVALCSLSGLFIGFSFF), 1229–1249 (VFMMFTIFGQLTQQIMPNFVT), 1268–1288 (IFILSNIVSEIPWAILMGVII), 1314–1334 (LMFLYIEMFLLFNATFSIMIV), and 1353–1373 (MCLIFCGVLASGSSLPGFWVF). A glycan (N-linked (GlcNAc...) asparagine) is linked at Asn1434. Residues 1465 to 1485 (FGLLWVYVVFNVIAAIGIYWL) form a helical membrane-spanning segment. The segment covering 1493-1505 (GKERASEPEDVQE) has biased composition (basic and acidic residues). Residues 1493 to 1529 (GKERASEPEDVQEKQVPAQSTEKKYQSISRSSESTVA) are disordered. Over residues 1518 to 1529 (QSISRSSESTVA) the composition is skewed to polar residues.

It belongs to the ABC transporter superfamily. ABCG family. PDR (TC 3.A.1.205) subfamily.

The protein resides in the cell membrane. The catalysed reaction is itraconazole(in) + ATP + H2O = itraconazole(out) + ADP + phosphate + H(+). It catalyses the reaction voriconazole(in) + ATP + H2O = voriconazole(out) + ADP + phosphate + H(+). It carries out the reaction fluconazole(in) + ATP + H2O = fluconazole(out) + ADP + phosphate + H(+). Pleiotropic ABC efflux transporter that confers resistance to structurally and functionally unrelated compounds including azoles such as fluconazole (FLC), itraconazole (ITC), posaconazole (POS), and voriconazole (VRC). This is ABC multidrug transporter AFR2 from Cryptococcus deuterogattii (strain R265) (Cryptococcus gattii VGII (strain R265)).